The sequence spans 199 residues: dITP/XTP pyrophosphatase (199 aa).

A substrate-binding site is contributed by 8 to 13; the sequence is SGNAGK. The active-site Proton acceptor is Asp-69. Asp-69 provides a ligand contact to Mg(2+). Substrate-binding positions include Ser-70, 154–157, Lys-177, and 182–183; these read FGYN and HR.

This sequence belongs to the HAM1 NTPase family. As to quaternary structure, homodimer. Requires Mg(2+) as cofactor.

The enzyme catalyses XTP + H2O = XMP + diphosphate + H(+). It catalyses the reaction dITP + H2O = dIMP + diphosphate + H(+). The catalysed reaction is ITP + H2O = IMP + diphosphate + H(+). Pyrophosphatase that catalyzes the hydrolysis of nucleoside triphosphates to their monophosphate derivatives, with a high preference for the non-canonical purine nucleotides XTP (xanthosine triphosphate), dITP (deoxyinosine triphosphate) and ITP. Seems to function as a house-cleaning enzyme that removes non-canonical purine nucleotides from the nucleotide pool, thus preventing their incorporation into DNA/RNA and avoiding chromosomal lesions. In Xanthomonas campestris pv. campestris (strain 8004), this protein is dITP/XTP pyrophosphatase.